Here is a 446-residue protein sequence, read N- to C-terminus: ATP-dependent protease ATPase subunit HslU (446 aa).

ATP-binding positions include valine 18, glycine 60–glutamate 65, aspartate 259, glutamate 324, and arginine 396.

This sequence belongs to the ClpX chaperone family. HslU subfamily. As to quaternary structure, a double ring-shaped homohexamer of HslV is capped on each side by a ring-shaped HslU homohexamer. The assembly of the HslU/HslV complex is dependent on binding of ATP.

Its subcellular location is the cytoplasm. Its function is as follows. ATPase subunit of a proteasome-like degradation complex; this subunit has chaperone activity. The binding of ATP and its subsequent hydrolysis by HslU are essential for unfolding of protein substrates subsequently hydrolyzed by HslV. HslU recognizes the N-terminal part of its protein substrates and unfolds these before they are guided to HslV for hydrolysis. The protein is ATP-dependent protease ATPase subunit HslU of Acidovorax ebreus (strain TPSY) (Diaphorobacter sp. (strain TPSY)).